The sequence spans 154 residues: Aspartate carbamoyltransferase regulatory chain (154 aa).

Residues C109, C114, C138, and C141 each contribute to the Zn(2+) site.

Belongs to the PyrI family. In terms of assembly, contains catalytic and regulatory chains. The cofactor is Zn(2+).

Its function is as follows. Involved in allosteric regulation of aspartate carbamoyltransferase. The chain is Aspartate carbamoyltransferase regulatory chain from Yersinia pestis.